Reading from the N-terminus, the 255-residue chain is tRNA (guanine-N(1)-)-methyltransferase (255 aa).

Residues G113 and 133–138 contribute to the S-adenosyl-L-methionine site; that span reads IGDYVL.

This sequence belongs to the RNA methyltransferase TrmD family. Homodimer.

Its subcellular location is the cytoplasm. It carries out the reaction guanosine(37) in tRNA + S-adenosyl-L-methionine = N(1)-methylguanosine(37) in tRNA + S-adenosyl-L-homocysteine + H(+). Its function is as follows. Specifically methylates guanosine-37 in various tRNAs. The polypeptide is tRNA (guanine-N(1)-)-methyltransferase (Chloroflexus aggregans (strain MD-66 / DSM 9485)).